A 342-amino-acid polypeptide reads, in one-letter code: Photosystem II assembly lipoprotein Ycf48 (342 aa).

The first 28 residues, 1–28 (MPVKFPSLKFEQLKQLVLVAAIAVFCVS), serve as a signal peptide directing secretion. Cys29 carries the N-palmitoyl cysteine lipid modification. Cys29 is lipidated: S-diacylglycerol cysteine. The short motif at 196–220 (RGNFYSTWAPGQTEWTPHNRNSSRR) is the Arg-rich patch element. A propeptide spanning residues 340–342 (MVP) is cleaved from the precursor.

The protein belongs to the Ycf48 family. In terms of assembly, part of early PSII assembly complexes which includes D1 (psbA) and PsbI; not found in mature PSII. By two-hybrid analysis in yeast interacts with precursor and intermediate forms of D1, but less with mature D1. Binds to the lumenal side of PSI and PSII complexes. Coimmunoprecipitates with YidC. Purified chlorophyll- and carotenoid-containing photosystem II (PSII) assembly intermediate complex RCII* (iD1, D1, D2, PsbE, PsbF, PsbI, Ycf39, Ycf48, HliC and HliD). The last 3 residues are removed in the mature protein.

It is found in the cellular thylakoid membrane. Its function is as follows. A factor required for optimal assembly of photosystem II (PSII) which acts in the early stages of PSII assembly. Also plays a role in replacement of photodamaged D1 (psbA). May interact with precursor D1 to prevent its premature processing before association with D2 (psbD). May also play a role in chlorophyll insertion into chlorophyll-binding proteins. Increasing levels of chlorophyll precursors partially suppresses deletion of this protein, supporting the idea that Ycf48 assists YidC in synthesis of chlorophyll-binding proteins. The Ycf39-Hlip complex binds D1 at an early stage of PSII assembly along with Ycf48, ribosomes and ChlG, the last enzyme in chlorophyll biosynthesis; it may be involved in chlorophyll reuse and delivery to D1 in the initial stages of PSII assembly. This is Photosystem II assembly lipoprotein Ycf48 from Synechocystis sp. (strain ATCC 27184 / PCC 6803 / Kazusa).